Reading from the N-terminus, the 588-residue chain is 3-methylmercaptopropionyl-CoA dehydrogenase (588 aa).

Glu435 acts as the Proton acceptor in catalysis.

This sequence belongs to the acyl-CoA dehydrogenase family. FAD serves as cofactor.

It catalyses the reaction 3-(methylsulfanyl)propanoyl-CoA + oxidized [electron-transfer flavoprotein] + H(+) = 3-(methylsulfanyl)acryloyl-CoA + reduced [electron-transfer flavoprotein]. Involved in the assimilation of dimethylsulphoniopropionate (DMSP), an important compound in the fixation of carbon in marine phytoplankton, by mediating the conversion of 3-(methylthio)propanoyl-CoA (MMPA-CoA) to 3-(methylthio)acryloyl-CoA (MTA-CoA). The chain is 3-methylmercaptopropionyl-CoA dehydrogenase from Ruegeria pomeroyi (strain ATCC 700808 / DSM 15171 / DSS-3) (Silicibacter pomeroyi).